A 227-amino-acid chain; its full sequence is Cytochrome c oxidase subunit 2 (227 aa).

Over 1–14 the chain is Mitochondrial intermembrane; sequence MAYSFQLGLQDATS. The chain crosses the membrane as a helical span at residues 15-45; it reads PIMEELMNFHDHTLMIVFLISSLVLYIISLM. At 46 to 59 the chain is on the mitochondrial matrix side; the sequence is LTTKLTHTSTMDAQ. Residues 60–87 form a helical membrane-spanning segment; sequence EVETIWTILPAVILIMIALPSLRILYMM. The Mitochondrial intermembrane portion of the chain corresponds to 88–227; it reads DEINNPVLTV…HFENWSASMI (140 aa). 6 residues coordinate Cu cation: H161, C196, E198, C200, H204, and M207. E198 is a Mg(2+) binding site.

This sequence belongs to the cytochrome c oxidase subunit 2 family. Component of the cytochrome c oxidase (complex IV, CIV), a multisubunit enzyme composed of 14 subunits. The complex is composed of a catalytic core of 3 subunits MT-CO1, MT-CO2 and MT-CO3, encoded in the mitochondrial DNA, and 11 supernumerary subunits COX4I, COX5A, COX5B, COX6A, COX6B, COX6C, COX7A, COX7B, COX7C, COX8 and NDUFA4, which are encoded in the nuclear genome. The complex exists as a monomer or a dimer and forms supercomplexes (SCs) in the inner mitochondrial membrane with NADH-ubiquinone oxidoreductase (complex I, CI) and ubiquinol-cytochrome c oxidoreductase (cytochrome b-c1 complex, complex III, CIII), resulting in different assemblies (supercomplex SCI(1)III(2)IV(1) and megacomplex MCI(2)III(2)IV(2)). Found in a complex with TMEM177, COA6, COX18, COX20, SCO1 and SCO2. Interacts with TMEM177 in a COX20-dependent manner. Interacts with COX20. Interacts with COX16. Cu cation serves as cofactor.

The protein localises to the mitochondrion inner membrane. It carries out the reaction 4 Fe(II)-[cytochrome c] + O2 + 8 H(+)(in) = 4 Fe(III)-[cytochrome c] + 2 H2O + 4 H(+)(out). In terms of biological role, component of the cytochrome c oxidase, the last enzyme in the mitochondrial electron transport chain which drives oxidative phosphorylation. The respiratory chain contains 3 multisubunit complexes succinate dehydrogenase (complex II, CII), ubiquinol-cytochrome c oxidoreductase (cytochrome b-c1 complex, complex III, CIII) and cytochrome c oxidase (complex IV, CIV), that cooperate to transfer electrons derived from NADH and succinate to molecular oxygen, creating an electrochemical gradient over the inner membrane that drives transmembrane transport and the ATP synthase. Cytochrome c oxidase is the component of the respiratory chain that catalyzes the reduction of oxygen to water. Electrons originating from reduced cytochrome c in the intermembrane space (IMS) are transferred via the dinuclear copper A center (CU(A)) of subunit 2 and heme A of subunit 1 to the active site in subunit 1, a binuclear center (BNC) formed by heme A3 and copper B (CU(B)). The BNC reduces molecular oxygen to 2 water molecules using 4 electrons from cytochrome c in the IMS and 4 protons from the mitochondrial matrix. This is Cytochrome c oxidase subunit 2 (MT-CO2) from Praomys jacksoni (African forest rat).